Here is a 1202-residue protein sequence, read N- to C-terminus: DNA-directed RNA polymerase subunit beta (1202 aa).

Residues 1151-1162 show a composition bias toward acidic residues; that stretch reads LRDMDEEDDDVV. Positions 1151-1202 are disordered; the sequence is LRDMDEEDDDVVNVDALSKYAEKQNEKTNASAEEAKAPSTESAPVETKNNQN. Over residues 1189–1202 the composition is skewed to polar residues; sequence STESAPVETKNNQN.

The protein belongs to the RNA polymerase beta chain family. In terms of assembly, the RNAP catalytic core consists of 2 alpha, 1 beta, 1 beta' and 1 omega subunit. When a sigma factor is associated with the core the holoenzyme is formed, which can initiate transcription.

It carries out the reaction RNA(n) + a ribonucleoside 5'-triphosphate = RNA(n+1) + diphosphate. Functionally, DNA-dependent RNA polymerase catalyzes the transcription of DNA into RNA using the four ribonucleoside triphosphates as substrates. In Pediococcus pentosaceus (strain ATCC 25745 / CCUG 21536 / LMG 10740 / 183-1w), this protein is DNA-directed RNA polymerase subunit beta.